The chain runs to 775 residues: Subtilisin-like protease SBT1.2 (775 aa).

Positions 1 to 20 (MEPKPFFLCIIFLLFCSSSS) are cleaved as a signal peptide. The 85-residue stretch at 27–111 (TYIVQLHPNS…AVRPDHVLQV (85 aa)) folds into the Inhibitor I9 domain. The region spanning 116–618 (SYKFLGLDGF…AGHVNPQKAI (503 aa)) is the Peptidase S8 domain. Residues D146 and H222 each act as charge relay system in the active site. The region spanning 388 to 470 (GGDKGSEFCL…YTESVLLKAY (83 aa)) is the PA domain. N472 and N544 each carry an N-linked (GlcNAc...) asparagine glycan. S552 functions as the Charge relay system in the catalytic mechanism. N-linked (GlcNAc...) asparagine glycosylation is present at N652.

The protein belongs to the peptidase S8 family. Mostly expressed in leaves and cotyledons (especially in epidermal cells), and, to a lower extent, in floral buds, stems, and siliques. Strongly expressed in stomatal precursor cells (meristemoids and guard mother cells).

It localises to the secreted. Its subcellular location is the extracellular space. It is found in the apoplast. The protein resides in the cell membrane. Functionally, serine protease involved in the negative regulation of stomatal density and distribution. Not active on EPFL6 (AC Q1PEY6). Positive regulator of water use efficiency (WUE). The polypeptide is Subtilisin-like protease SBT1.2 (Arabidopsis thaliana (Mouse-ear cress)).